Consider the following 414-residue polypeptide: MQSSRPSDRQLAIVVSVAVGIVVAVITTATFWWVYDLTLGRAQREAAQTAGARWSPSDGIKVITSSPPVTPTDGRQNWMGTQAWNEGVQAGQAWIQQYPNTVNVQVLIGMSSAQIWTYMQQYVSGALGVGCQYCHNINNFASDEYPQKIAARNMLRLVRDVNAEFIVNLPNWQGNYVQCATCHNNAPNNLEGFGAQFINSVPPIKVTVDPLDANGMAILDPAQKPEAIREPVLLKDAILFYIYNYQVWKPFDPNDPESGRGSLALTYDGGRTQDQVTINQNVMNYQAWSLGVGCTFCHNSRNFVAYELNPAGDNVLNPLYAYNKLKAQRMLLLTTWLAENWPRYGAIAKPEIPTGSGAASRYSYQRLGDGQIYNVPGCYTCHQGNNIPLASINQANIPSGDAGIVVLPPQIRGR.

Positions 1 to 24 (MQSSRPSDRQLAIVVSVAVGIVVA) are cleaved as a signal peptide. Heme-binding residues include M110, C131, C134, H135, M154, C179, C182, H183, M283, C294, C297, H298, C378, C381, and H382.

Post-translationally, binds 4 heme groups per subunit. In terms of processing, the N-terminus is blocked.

It localises to the periplasm. Serves as the immediate electron donor to the oxidized BChl2 (bacteriochlorophyll dimer) that is oxidized in the first step of light-induced charge separation. Can also oxidize low-potential substrates. This chain is Cytochrome c-554 (puf2C), found in Chloroflexus aurantiacus (strain ATCC 29366 / DSM 635 / J-10-fl).